Here is a 393-residue protein sequence, read N- to C-terminus: Phosphoglycerate kinase (393 aa).

Substrate is bound by residues 21 to 23 (DFN), Arg36, 59 to 62 (HLGR), Arg118, and Arg151. ATP contacts are provided by residues Lys201, Glu323, and 349 to 352 (GGDS).

This sequence belongs to the phosphoglycerate kinase family. In terms of assembly, monomer.

Its subcellular location is the cytoplasm. The enzyme catalyses (2R)-3-phosphoglycerate + ATP = (2R)-3-phospho-glyceroyl phosphate + ADP. The protein operates within carbohydrate degradation; glycolysis; pyruvate from D-glyceraldehyde 3-phosphate: step 2/5. In Moorella thermoacetica (strain ATCC 39073 / JCM 9320), this protein is Phosphoglycerate kinase.